The following is a 371-amino-acid chain: Histidinol-phosphate aminotransferase (371 aa).

Lysine 232 is subject to N6-(pyridoxal phosphate)lysine.

The protein belongs to the class-II pyridoxal-phosphate-dependent aminotransferase family. Histidinol-phosphate aminotransferase subfamily. Homodimer. Requires pyridoxal 5'-phosphate as cofactor.

The catalysed reaction is L-histidinol phosphate + 2-oxoglutarate = 3-(imidazol-4-yl)-2-oxopropyl phosphate + L-glutamate. The protein operates within amino-acid biosynthesis; L-histidine biosynthesis; L-histidine from 5-phospho-alpha-D-ribose 1-diphosphate: step 7/9. The sequence is that of Histidinol-phosphate aminotransferase from Methylibium petroleiphilum (strain ATCC BAA-1232 / LMG 22953 / PM1).